A 60-amino-acid chain; its full sequence is Venom protein 4.1 (60 aa).

An N-terminal signal peptide occupies residues 1–26 (MKALCAILLVLFACSVMFEHFSISTA).

The protein belongs to the non-disulfide-bridged peptide (NDBP) superfamily. In terms of tissue distribution, expressed by the venom gland.

It localises to the secreted. The chain is Venom protein 4.1 from Lychas mucronatus (Chinese swimming scorpion).